The primary structure comprises 377 residues: Succinyl-diaminopimelate desuccinylase (377 aa).

A Zn(2+)-binding site is contributed by H66. D68 is a catalytic residue. D99 contacts Zn(2+). E133 functions as the Proton acceptor in the catalytic mechanism. Zn(2+) is bound by residues E134, E162, and H348.

This sequence belongs to the peptidase M20A family. DapE subfamily. As to quaternary structure, homodimer. It depends on Zn(2+) as a cofactor. Co(2+) serves as cofactor.

The catalysed reaction is N-succinyl-(2S,6S)-2,6-diaminopimelate + H2O = (2S,6S)-2,6-diaminopimelate + succinate. It functions in the pathway amino-acid biosynthesis; L-lysine biosynthesis via DAP pathway; LL-2,6-diaminopimelate from (S)-tetrahydrodipicolinate (succinylase route): step 3/3. In terms of biological role, catalyzes the hydrolysis of N-succinyl-L,L-diaminopimelic acid (SDAP), forming succinate and LL-2,6-diaminopimelate (DAP), an intermediate involved in the bacterial biosynthesis of lysine and meso-diaminopimelic acid, an essential component of bacterial cell walls. This is Succinyl-diaminopimelate desuccinylase from Histophilus somni (strain 2336) (Haemophilus somnus).